The primary structure comprises 617 residues: Guanylate cyclase soluble subunit beta-2 (617 aa).

His26 serves as a coordination point for heme. The Guanylate cyclase domain maps to 391-519; that stretch reads TILFSDVVTF…DTVNTASRME (129 aa). A compositionally biased stretch (basic and acidic residues) spans 577 to 586; sequence RSKTPVDHKG. Positions 577–605 are disordered; it reads RSKTPVDHKGSTQKASLPTTKLQGSVQPS. Residues 588-604 are compositionally biased toward polar residues; it reads TQKASLPTTKLQGSVQP.

The protein belongs to the adenylyl cyclase class-4/guanylyl cyclase family. As to quaternary structure, heterodimer of an alpha and a beta chain. Requires heme as cofactor. In terms of tissue distribution, expressed in gastric signet ring cell carcinoma, but not in the normal stomach.

Its subcellular location is the cytoplasm. It carries out the reaction GTP = 3',5'-cyclic GMP + diphosphate. Activated by nitric oxide in the presence of magnesium or manganese ions. This Homo sapiens (Human) protein is Guanylate cyclase soluble subunit beta-2 (GUCY1B2).